The chain runs to 308 residues: Ribonuclease 3 (308 aa).

In terms of domain architecture, RNase III spans 20–145 (YLRFYKMLGF…LVGAIYLDRG (126 aa)). Glu-62 lines the Mg(2+) pocket. The active site involves Asp-66. Residues Asn-131 and Glu-134 each coordinate Mg(2+). The active site involves Glu-134. The region spanning 173-242 (NFKSKLIEWS…ARVALGKIKN (70 aa)) is the DRBM domain. Positions 261-281 (QEEVTVSDSKPSDSGAVTPDL) are disordered.

It belongs to the ribonuclease III family. Homodimer. Mg(2+) serves as cofactor.

It localises to the cytoplasm. The catalysed reaction is Endonucleolytic cleavage to 5'-phosphomonoester.. In terms of biological role, digests double-stranded RNA. Involved in the processing of primary rRNA transcript to yield the immediate precursors to the large and small rRNAs (23S and 16S). Processes some mRNAs, and tRNAs when they are encoded in the rRNA operon. Processes pre-crRNA and tracrRNA of type II CRISPR loci if present in the organism. The polypeptide is Ribonuclease 3 (Phocaeicola vulgatus (strain ATCC 8482 / DSM 1447 / JCM 5826 / CCUG 4940 / NBRC 14291 / NCTC 11154) (Bacteroides vulgatus)).